We begin with the raw amino-acid sequence, 216 residues long: Ras-related protein Rab-5C (216 aa).

Residues Ser-30, Ala-31, Gly-33, Lys-34, Ser-35, Ser-36, His-47, Glu-48, Thr-53, and Gly-79 each coordinate GTP. A Mg(2+)-binding site is contributed by Ser-35. Short sequence motifs (switch) lie at residues 45-57 (QFHE…IGAA) and 78-94 (AGQE…YRGA). Mg(2+) is bound at residue Thr-53. Ser-85 is subject to Phosphoserine. Positions 134, 135, 137, 165, and 166 each coordinate GTP. A disordered region spans residues 185–216 (NEPQNAAGAPGRNRGVDLQENNPASRSQCCSN). Over residues 203–216 (QENNPASRSQCCSN) the composition is skewed to polar residues. 2 S-geranylgeranyl cysteine lipidation sites follow: Cys-213 and Cys-214.

The protein belongs to the small GTPase superfamily. Rab family. As to quaternary structure, interacts with EEA1 and INCA1. Interacts with GDI1, GDI2, CHML and CHM; phosphorylation at Ser-85 disrupts this interaction. Mg(2+) is required as a cofactor. Phosphorylation of Ser-85 in the switch II region by LRRK2 prevents the association of RAB regulatory proteins, including CHM, CHML and RAB GDP dissociation inhibitors GDI1 and GDI2.

The protein localises to the cell membrane. It is found in the early endosome membrane. It localises to the melanosome. The enzyme catalyses GTP + H2O = GDP + phosphate + H(+). Its activity is regulated as follows. Regulated by guanine nucleotide exchange factors (GEFs) which promote the exchange of bound GDP for free GTP. Regulated by GTPase activating proteins (GAPs) which increase the GTP hydrolysis activity. Inhibited by GDP dissociation inhibitors (GDIs). Its function is as follows. The small GTPases Rab are key regulators of intracellular membrane trafficking, from the formation of transport vesicles to their fusion with membranes. Rabs cycle between an inactive GDP-bound form and an active GTP-bound form that is able to recruit to membranes different sets of downstream effectors directly responsible for vesicle formation, movement, tethering and fusion. This chain is Ras-related protein Rab-5C (RAB5C), found in Bos taurus (Bovine).